The chain runs to 452 residues: GPI mannosyltransferase 2 (452 aa).

Residues 1–7 lie on the Cytoplasmic side of the membrane; it reads MMEKVTK. Residues 8–28 form a helical membrane-spanning segment; it reads LALTSRVMVLVVQLLANFATP. Residues 29–113 lie on the Lumenal side of the membrane; the sequence is DHKPDVFRMP…HLGIPLSRDA (85 aa). A helical membrane pass occupies residues 114 to 134; the sequence is LILLVAVALNVLIFCKTANVL. Topologically, residues 135–161 are cytoplasmic; it reads YKLTQRMFNDHNKSWNAALIFCFNPAS. Residues 162–182 traverse the membrane as a helical segment; the sequence is IFFSAAYSETFFAFASFSLML. At 183–209 the chain is on the lumenal side; it reads ECMRSEKDFRTFRLGAALTGCFVCRSN. Residues 210–230 form a helical membrane-spanning segment; sequence GLLTLGFPLYFLARHILLSTG. Residues 231–238 are Cytoplasmic-facing; sequence SVQRCWQL. Residues 239 to 259 form a helical membrane-spanning segment; that stretch reads FKMGLAMLVALGILHTYYFYI. Topologically, residues 260-284 are lumenal; sequence YRLYCLPDVKVQHAQHVVDYAKERS. A helical transmembrane segment spans residues 285–305; that stretch reads FLISGQASVGSPWCGYTLPFP. At 306-327 the chain is on the cytoplasmic side; the sequence is YTYVQSHYWDVGFLRYYKWKQL. Residues 328–348 traverse the membrane as a helical segment; the sequence is PNFLLALPMLLFMHWHCYDYI. Over 349–370 the chain is Lumenal; that stretch reads RKLVANTWSKISPSEYQGILKE. A helical membrane pass occupies residues 371-391; the sequence is HISFPFVLHAAVLTLVCTLYV. Residues 392 to 398 lie on the Cytoplasmic side of the membrane; that stretch reads HIQVSTR. Residues 399–419 form a helical membrane-spanning segment; sequence LLASATPVFYWFAADYMPNTF. The Lumenal segment spans residues 420 to 426; it reads QLSFRSK. The chain crosses the membrane as a helical span at residues 427–447; that stretch reads AGVLFIWCLTYSLVGTVLFSN. The Cytoplasmic segment spans residues 448-452; that stretch reads NYPWT.

The protein belongs to the PIGV family.

Its subcellular location is the endoplasmic reticulum membrane. The protein operates within glycolipid biosynthesis; glycosylphosphatidylinositol-anchor biosynthesis. In terms of biological role, mannosyltransferase involved in glycosylphosphatidylinositol-anchor biosynthesis. Transfers the second mannose to the glycosylphosphatidylinositol during GPI precursor assembly. Required for the GPI-mediated endoplasmic reticulum exit and proper targeting to the cell surface of chp. Required for GPI-mediated membrane attachment of chp, qsm and Cont. Essential for microvillar stability in the rhabdomere. The chain is GPI mannosyltransferase 2 from Drosophila pseudoobscura pseudoobscura (Fruit fly).